The sequence spans 252 residues: tRNA (guanine-N(1)-)-methyltransferase (252 aa).

S-adenosyl-L-methionine is bound by residues glycine 117 and 137-142; that span reads IGDYVL.

This sequence belongs to the RNA methyltransferase TrmD family. In terms of assembly, homodimer.

The protein resides in the cytoplasm. The catalysed reaction is guanosine(37) in tRNA + S-adenosyl-L-methionine = N(1)-methylguanosine(37) in tRNA + S-adenosyl-L-homocysteine + H(+). Functionally, specifically methylates guanosine-37 in various tRNAs. The sequence is that of tRNA (guanine-N(1)-)-methyltransferase from Idiomarina loihiensis (strain ATCC BAA-735 / DSM 15497 / L2-TR).